The chain runs to 439 residues: Leukocyte immunoglobulin-like receptor subfamily A member 3 (439 aa).

Residues 1 to 23 (MTPILTVLICLGLSLDPRTHVQA) form the signal peptide. Ig-like C2-type domains follow at residues 27-108 (PKPT…AGLS), 119-224 (TGAY…GVSK), 226-315 (PSLS…DPLD), and 326-415 (PFLS…SDPL). A disulfide bridge links Cys49 with Cys98. Asn140 carries an N-linked (GlcNAc...) asparagine glycan. Disulfide bonds link Cys145-Cys197, Cys157-Cys167, and Cys246-Cys297. Asn281, Asn302, and Asn341 each carry an N-linked (GlcNAc...) asparagine glycan. Residues Cys346 and Cys397 are joined by a disulfide bond. The N-linked (GlcNAc...) asparagine glycan is linked to Asn431.

Post-translationally, N-glycosylation is required for ligand binding. In terms of tissue distribution, detected in B-cells, and at lower levels in natural killer (NK) cells. Detected in peripheral blood monocytes and lung.

It is found in the secreted. Functionally, acts as a soluble receptor for class I MHC antigens. Binds both classical and non-classical HLA class I molecules but with reduced affinities compared to LILRB1 or LILRB2. Binds with high affinity to the surface of monocytes, leading to abolish LPS-induced TNF-alpha production by monocytes. The polypeptide is Leukocyte immunoglobulin-like receptor subfamily A member 3 (LILRA3) (Homo sapiens (Human)).